The primary structure comprises 283 residues: Heavy metal-associated isoprenylated plant protein 3 (283 aa).

A compositionally biased stretch (basic and acidic residues) spans M1–E22. The interval M1–I26 is disordered. HMA domains lie at S25–V88 and V132–V195. Zn(2+) contacts are provided by C36 and C39. Over residues E82–E129 the composition is skewed to basic and acidic residues. The segment at E82–P131 is disordered. Residues C143 and C146 each coordinate Zn(2+). The span at V198–G230 shows a compositional bias: basic and acidic residues. The interval V198–V238 is disordered. C280 carries the post-translational modification Cysteine methyl ester. C280 is lipidated: S-farnesyl cysteine. A propeptide spans V281–M283 (removed in mature form).

It belongs to the HIPP family.

The protein resides in the nucleus. It localises to the nucleolus. Its subcellular location is the cytoplasm. Heavy-metal-binding protein. Binds high amounts of zinc. May act as an upstream regulator of the salicylate-dependent pathogen response. Involved in abiotic stress responses, and seed and flower development. In Arabidopsis thaliana (Mouse-ear cress), this protein is Heavy metal-associated isoprenylated plant protein 3.